Consider the following 236-residue polypeptide: tRNA1(Val) (adenine(37)-N6)-methyltransferase (236 aa).

It belongs to the methyltransferase superfamily. tRNA (adenine-N(6)-)-methyltransferase family.

Its subcellular location is the cytoplasm. It catalyses the reaction adenosine(37) in tRNA1(Val) + S-adenosyl-L-methionine = N(6)-methyladenosine(37) in tRNA1(Val) + S-adenosyl-L-homocysteine + H(+). Specifically methylates the adenine in position 37 of tRNA(1)(Val) (anticodon cmo5UAC). The sequence is that of tRNA1(Val) (adenine(37)-N6)-methyltransferase from Actinobacillus pleuropneumoniae serotype 5b (strain L20).